A 146-amino-acid chain; its full sequence is Stress-responsive DNAJB4-interacting membrane protein 1 (146 aa).

A signal peptide spans 1–26 (MWPAPCSVGRLLIFFMCSSSGYVVQG). The Extracellular segment spans residues 27–66 (CGPSPGARTTLGSPLSLWSIKTPSHIFCTRRAINLGFPSP). A helical membrane pass occupies residues 67–87 (PLVQLIFWSLNAGLDLYLCLI). At 88–94 (SSCGFSQ) the chain is on the cytoplasmic side. Residues 95 to 115 (VFWPVEAFCSFSLSFFALALS) form a helical membrane-spanning segment. Topologically, residues 116 to 146 (HKFVICRLDQHIFSGFTKSLKNLPPCHRTDI) are extracellular.

Homodimer. Interacts with DNAJB4. As to expression, expressed in brain with higher detection in neurons than astrocytes. Decreased expression in Alzheimer brains. Detected at protein level in brain and cervix.

It is found in the membrane. In terms of biological role, promotes neuronal cells survival to stress conditions. The chain is Stress-responsive DNAJB4-interacting membrane protein 1 (SDIM1) from Homo sapiens (Human).